The chain runs to 129 residues: uncharacterized protein (129 aa).

A helical transmembrane segment spans residues 46 to 66 (FFHFFFSFLLHLISPAVTGGI).

Its subcellular location is the membrane. This is an uncharacterized protein from Saccharomyces cerevisiae (strain ATCC 204508 / S288c) (Baker's yeast).